A 102-amino-acid polypeptide reads, in one-letter code: Small ribosomal subunit protein uS10 (102 aa).

The protein belongs to the universal ribosomal protein uS10 family. As to quaternary structure, part of the 30S ribosomal subunit.

Its function is as follows. Involved in the binding of tRNA to the ribosomes. The polypeptide is Small ribosomal subunit protein uS10 (Bacillus cereus (strain ATCC 10987 / NRS 248)).